The primary structure comprises 592 residues: MTAPNVNTLWAETLVGELVAGGVDAVCLSPGSRSTPLTVAFAEHPDIEVFSHLDERSAAFFALGRARRTGEPTPLVCTSGTAAANYHPAVIEANQSGVPLLLLTADRPPELIDSGANQTVDQEKLYGDAVRWYRDMPEPEAEPRKVRMLRTTAARALAESTGSDPGPVHLNCRFRKPLEPTPMPEDDPAGVPADWAGGDNGAKIGRDGPFVTTSEGVETPDEQTVRRVQDALEAAERGLIVAGPADQGLSADSLERLAAATGFPVLADPLSDLRFGPHVDRLDVPVCGGYDGYLGSDSVDQWDDPDVVVRFGASPTSKPLRHYLRDADCQQFLVDPAGGWSEAEFTATNLLVANPDATADALAGETLGGVAASWREQFIRAEQTHWDAVTETASETYWEGGVLSDVTALAPDPATLFISNSMPIRDMDRFGGPRDADLTVLGNRGASGIDGITSTALGAGSATSDPLVLVTGDLAYYHDMNGLLALGRCAVDATVVLLNNDGGGIFHMLPIEDHPTFEDQFRTPHGLDFEPTEALYSLQFERVADRRQFRERFAESVQTDGTQVIEVRFDAGDSHAVRDQLTEQVAETLAGD.

Belongs to the TPP enzyme family. MenD subfamily. Homodimer. Mg(2+) is required as a cofactor. It depends on Mn(2+) as a cofactor. Thiamine diphosphate serves as cofactor.

The catalysed reaction is isochorismate + 2-oxoglutarate + H(+) = 5-enolpyruvoyl-6-hydroxy-2-succinyl-cyclohex-3-ene-1-carboxylate + CO2. It participates in quinol/quinone metabolism; 1,4-dihydroxy-2-naphthoate biosynthesis; 1,4-dihydroxy-2-naphthoate from chorismate: step 2/7. Its pathway is quinol/quinone metabolism; menaquinone biosynthesis. Functionally, catalyzes the thiamine diphosphate-dependent decarboxylation of 2-oxoglutarate and the subsequent addition of the resulting succinic semialdehyde-thiamine pyrophosphate anion to isochorismate to yield 2-succinyl-5-enolpyruvyl-6-hydroxy-3-cyclohexene-1-carboxylate (SEPHCHC). This Haloarcula marismortui (strain ATCC 43049 / DSM 3752 / JCM 8966 / VKM B-1809) (Halobacterium marismortui) protein is 2-succinyl-5-enolpyruvyl-6-hydroxy-3-cyclohexene-1-carboxylate synthase.